The primary structure comprises 482 residues: Sugar transporter ERD6-like 16 (482 aa).

Helical transmembrane passes span 42 to 62, 80 to 100, 117 to 137, 142 to 162, 173 to 193, 197 to 217, 280 to 300, 316 to 336, 344 to 364, 382 to 402, 413 to 433, and 443 to 463; these read LMVLFSTFVAVCGSFEFGSCV, LAEFSMFGSILTIGAMLGAVM, SACFCITGWLAVFFTKGALLL, FFTGYGIGVFSYVVPVYIAEI, TLNQLMIVIGSSVSFLIGSLI, TLALTGLAPCIVLLFGLCFIP, VIIGVSLMVFQQFVGINGIGF, LGTIAIACVQVPITVLGTILI, LIMISAGGIFLGCILTGTSFL, GVLIYVAAFSIGMGPVPWVIM, IAGSLVVLVNWSGAWAVSYTF, and GTFYLYSAFAAATIIFVAKMV.

It belongs to the major facilitator superfamily. Sugar transporter (TC 2.A.1.1) family.

It localises to the membrane. Functionally, sugar transporter. The sequence is that of Sugar transporter ERD6-like 16 from Arabidopsis thaliana (Mouse-ear cress).